A 188-amino-acid chain; its full sequence is UPF0340 protein BH3766 (188 aa).

It belongs to the UPF0340 family.

This Halalkalibacterium halodurans (strain ATCC BAA-125 / DSM 18197 / FERM 7344 / JCM 9153 / C-125) (Bacillus halodurans) protein is UPF0340 protein BH3766.